A 654-amino-acid polypeptide reads, in one-letter code: tRNA 5-methylaminomethyl-2-thiouridine biosynthesis bifunctional protein MnmC (654 aa).

The segment at 1 to 235 (MSDFQHAQLD…KREMLSGTYQ (235 aa)) is tRNA (mnm(5)s(2)U34)-methyltransferase. Residues 261–654 (VGGGLAGCAS…LRDLVRGQRG (394 aa)) form an FAD-dependent cmnm(5)s(2)U34 oxidoreductase region.

This sequence in the N-terminal section; belongs to the methyltransferase superfamily. tRNA (mnm(5)s(2)U34)-methyltransferase family. The protein in the C-terminal section; belongs to the DAO family. Requires FAD as cofactor.

The protein resides in the cytoplasm. The enzyme catalyses 5-aminomethyl-2-thiouridine(34) in tRNA + S-adenosyl-L-methionine = 5-methylaminomethyl-2-thiouridine(34) in tRNA + S-adenosyl-L-homocysteine + H(+). Catalyzes the last two steps in the biosynthesis of 5-methylaminomethyl-2-thiouridine (mnm(5)s(2)U) at the wobble position (U34) in tRNA. Catalyzes the FAD-dependent demodification of cmnm(5)s(2)U34 to nm(5)s(2)U34, followed by the transfer of a methyl group from S-adenosyl-L-methionine to nm(5)s(2)U34, to form mnm(5)s(2)U34. In Pseudomonas aeruginosa (strain ATCC 15692 / DSM 22644 / CIP 104116 / JCM 14847 / LMG 12228 / 1C / PRS 101 / PAO1), this protein is tRNA 5-methylaminomethyl-2-thiouridine biosynthesis bifunctional protein MnmC.